We begin with the raw amino-acid sequence, 511 residues long: Probable mannosyl-oligosaccharide alpha-1,2-mannosidase 1B (511 aa).

Positions M1 to A18 are cleaved as a signal peptide. N-linked (GlcNAc...) asparagine glycans are attached at residues N90 and N177. C327 and C356 are disulfide-bonded. E370 (proton donor) is an active-site residue. A glycan (N-linked (GlcNAc...) asparagine) is linked at N433. Residue T501 participates in Ca(2+) binding.

Belongs to the glycosyl hydrolase 47 family. In terms of assembly, monomer. Requires Ca(2+) as cofactor. It depends on Mg(2+) as a cofactor.

The protein resides in the cytoplasmic vesicle lumen. It catalyses the reaction N(4)-(alpha-D-Man-(1-&gt;2)-alpha-D-Man-(1-&gt;2)-alpha-D-Man-(1-&gt;3)-[alpha-D-Man-(1-&gt;2)-alpha-D-Man-(1-&gt;3)-[alpha-D-Man-(1-&gt;2)-alpha-D-Man-(1-&gt;6)]-alpha-D-Man-(1-&gt;6)]-beta-D-Man-(1-&gt;4)-beta-D-GlcNAc-(1-&gt;4)-beta-D-GlcNAc)-L-asparaginyl-[protein] (N-glucan mannose isomer 9A1,2,3B1,2,3) + 4 H2O = N(4)-(alpha-D-Man-(1-&gt;3)-[alpha-D-Man-(1-&gt;3)-[alpha-D-Man-(1-&gt;6)]-alpha-D-Man-(1-&gt;6)]-beta-D-Man-(1-&gt;4)-beta-D-GlcNAc-(1-&gt;4)-beta-D-GlcNAc)-L-asparaginyl-[protein] (N-glucan mannose isomer 5A1,2) + 4 beta-D-mannose. It carries out the reaction N(4)-(alpha-D-Man-(1-&gt;2)-alpha-D-Man-(1-&gt;2)-alpha-D-Man-(1-&gt;3)-[alpha-D-Man-(1-&gt;3)-[alpha-D-Man-(1-&gt;2)-alpha-D-Man-(1-&gt;6)]-alpha-D-Man-(1-&gt;6)]-beta-D-Man-(1-&gt;4)-beta-D-GlcNAc-(1-&gt;4)-beta-D-GlcNAc)-L-asparaginyl-[protein] (N-glucan mannose isomer 8A1,2,3B1,3) + 3 H2O = N(4)-(alpha-D-Man-(1-&gt;3)-[alpha-D-Man-(1-&gt;3)-[alpha-D-Man-(1-&gt;6)]-alpha-D-Man-(1-&gt;6)]-beta-D-Man-(1-&gt;4)-beta-D-GlcNAc-(1-&gt;4)-beta-D-GlcNAc)-L-asparaginyl-[protein] (N-glucan mannose isomer 5A1,2) + 3 beta-D-mannose. It participates in protein modification; protein glycosylation. Its function is as follows. Involved in the maturation of Asn-linked oligosaccharides. Progressively trims alpha-1,2-linked mannose residues from Man(9)GlcNAc(2) to produce Man(5)GlcNAc(2). In Aspergillus clavatus (strain ATCC 1007 / CBS 513.65 / DSM 816 / NCTC 3887 / NRRL 1 / QM 1276 / 107), this protein is Probable mannosyl-oligosaccharide alpha-1,2-mannosidase 1B (mns1B).